We begin with the raw amino-acid sequence, 327 residues long: Beta-ketoacyl-[acyl-carrier-protein] synthase III (327 aa).

Residues Cys-112 and His-253 contribute to the active site. The segment at 254 to 258 is ACP-binding; sequence QANER. Residue Asn-283 is part of the active site.

It belongs to the thiolase-like superfamily. FabH family. In terms of assembly, homodimer.

Its subcellular location is the cytoplasm. It carries out the reaction malonyl-[ACP] + acetyl-CoA + H(+) = 3-oxobutanoyl-[ACP] + CO2 + CoA. It functions in the pathway lipid metabolism; fatty acid biosynthesis. Its function is as follows. Catalyzes the condensation reaction of fatty acid synthesis by the addition to an acyl acceptor of two carbons from malonyl-ACP. Catalyzes the first condensation reaction which initiates fatty acid synthesis and may therefore play a role in governing the total rate of fatty acid production. Possesses both acetoacetyl-ACP synthase and acetyl transacylase activities. Its substrate specificity determines the biosynthesis of branched-chain and/or straight-chain of fatty acids. The polypeptide is Beta-ketoacyl-[acyl-carrier-protein] synthase III (Chlamydia trachomatis serovar A (strain ATCC VR-571B / DSM 19440 / HAR-13)).